The chain runs to 352 residues: MDYQVSSPTYDIDYYTSEPCQKINVKQIAARLLPPLYSLVFIFGFVGNMLVILILINCKRLKSMTDIYLLNLAISDLFFLLTVPFWAHYAAAQWDFGNTMCQLLTGLYFIGFFSGIFFIILLTIDRYLAIVHAVFALKARTVTFGVVTSVITWVVAVFASLPGIIFTRSQKEGLHYTCSSHFPYSQYQFWKNFQTLKIVILGLVLPLLVMVICYSGILKTLLRCRNEKKRHRAVRLIFTIMIVYFLFWAPYNIVLLLNTFQEFFGLNNCSSSNRLDQAMQVTETLGMTHCCINPIIYAFVGEKFRNYLLVFFQKHIAKRFCKCCSIFQQEAPERASSVYTRSTGEQEISVGL.

Residues 1–30 (MDYQVSSPTYDIDYYTSEPCQKINVKQIAA) are Extracellular-facing. A Sulfotyrosine modification is found at Tyr-3. Residues Ser-6 and Ser-7 are each glycosylated (O-linked (GalNAc...) serine). A sulfotyrosine mark is found at Tyr-10, Tyr-14, and Tyr-15. Cystine bridges form between Cys-20/Cys-269 and Cys-101/Cys-178. Residues 31–58 (RLLPPLYSLVFIFGFVGNMLVILILINC) traverse the membrane as a helical segment. Topologically, residues 59-68 (KRLKSMTDIY) are cytoplasmic. A helical transmembrane segment spans residues 69 to 89 (LLNLAISDLFFLLTVPFWAHY). The Extracellular segment spans residues 90–102 (AAAQWDFGNTMCQ). A helical membrane pass occupies residues 103-124 (LLTGLYFIGFFSGIFFIILLTI). Residues 125-141 (DRYLAIVHAVFALKART) are Cytoplasmic-facing. The helical transmembrane segment at 142-166 (VTFGVVTSVITWVVAVFASLPGIIF) threads the bilayer. Residues 167-198 (TRSQKEGLHYTCSSHFPYSQYQFWKNFQTLKI) are Extracellular-facing. Residues 199-218 (VILGLVLPLLVMVICYSGIL) form a helical membrane-spanning segment. Residues 219-235 (KTLLRCRNEKKRHRAVR) lie on the Cytoplasmic side of the membrane. A helical membrane pass occupies residues 236-260 (LIFTIMIVYFLFWAPYNIVLLLNTF). Topologically, residues 261–277 (QEFFGLNNCSSSNRLDQ) are extracellular. The helical transmembrane segment at 278 to 301 (AMQVTETLGMTHCCINPIIYAFVG) threads the bilayer. Over 302–352 (EKFRNYLLVFFQKHIAKRFCKCCSIFQQEAPERASSVYTRSTGEQEISVGL) the chain is Cytoplasmic. 3 S-palmitoyl cysteine lipidation sites follow: Cys-321, Cys-323, and Cys-324. Residues Ser-336, Ser-337, Ser-342, and Ser-349 each carry the phosphoserine; by BARK1 modification.

It belongs to the G-protein coupled receptor 1 family. Interacts with PRAF2. Efficient ligand binding to CCL3/MIP-1alpha and CCL4/MIP-1beta requires sulfation, O-glycosylation and sialic acid modifications. Glycosylation on Ser-6 is required for efficient binding of CCL4. Interacts with GRK2. Interacts with ARRB1 and ARRB2. Interacts with CNIH4. Interacts with S100A4; this interaction stimulates T-lymphocyte chemotaxis. Post-translationally, sulfated on at least 2 of the N-terminal tyrosines. Sulfation is required for efficient binding of the chemokines, CCL3 and CCL4. Palmitoylation in the C-terminal is important for cell surface expression. In terms of processing, phosphorylation on serine residues in the C-terminal is stimulated by binding CC chemokines especially by APO-RANTES. Post-translationally, O-glycosylated, but not N-glycosylated. Ser-6 appears to be the major site even if Ser-7 may be also O-glycosylated. Also sialylated glycans present which contribute to chemokine binding. Thr-16 and Ser-17 may also be glycosylated and, if so, with small moieties such as a T-antigen.

The protein localises to the cell membrane. Its function is as follows. Receptor for a number of inflammatory CC-chemokines including CCL3/MIP-1-alpha, CCL4/MIP-1-beta and RANTES and subsequently transduces a signal by increasing the intracellular calcium ion level. May play a role in the control of granulocytic lineage proliferation or differentiation. Participates in T-lymphocyte migration to the infection site by acting as a chemotactic receptor. This Pongo abelii (Sumatran orangutan) protein is C-C chemokine receptor type 5 (CCR5).